Reading from the N-terminus, the 150-residue chain is Large ribosomal subunit protein bL9 (150 aa).

Belongs to the bacterial ribosomal protein bL9 family.

In terms of biological role, binds to the 23S rRNA. This is Large ribosomal subunit protein bL9 from Shewanella frigidimarina (strain NCIMB 400).